Consider the following 709-residue polypeptide: Polyribonucleotide nucleotidyltransferase (709 aa).

Mg(2+)-binding residues include Asp-482 and Asp-488. The KH domain maps to 549–608; it reads PRIITMSIDPDKIREVIGPGGKVINKIIAETGVKIDIEDDGRIFIAATDTEAANKAVRII. Residues 618 to 686 form the S1 motif domain; it reads GKVYTGKVTR…KQGRINLSRK (69 aa).

The protein belongs to the polyribonucleotide nucleotidyltransferase family. Mg(2+) serves as cofactor.

The protein localises to the cytoplasm. It catalyses the reaction RNA(n+1) + phosphate = RNA(n) + a ribonucleoside 5'-diphosphate. Involved in mRNA degradation. Catalyzes the phosphorolysis of single-stranded polyribonucleotides processively in the 3'- to 5'-direction. This is Polyribonucleotide nucleotidyltransferase from Heliobacterium modesticaldum (strain ATCC 51547 / Ice1).